Consider the following 171-residue polypeptide: uncharacterized protein (171 aa).

This is an uncharacterized protein from Encephalitozoon cuniculi (strain GB-M1) (Microsporidian parasite).